Reading from the N-terminus, the 719-residue chain is Polyribonucleotide nucleotidyltransferase (719 aa).

D490 and D496 together coordinate Mg(2+). Positions 557-619 constitute a KH domain; the sequence is PKIEIIIIPK…KSIDAALTRI (63 aa). An S1 motif domain is found at 629-699; that stretch reads GEIYEGKIRS…KTGKFKLSHK (71 aa).

Belongs to the polyribonucleotide nucleotidyltransferase family. Requires Mg(2+) as cofactor.

Its subcellular location is the cytoplasm. It carries out the reaction RNA(n+1) + phosphate = RNA(n) + a ribonucleoside 5'-diphosphate. Its function is as follows. Involved in mRNA degradation. Catalyzes the phosphorolysis of single-stranded polyribonucleotides processively in the 3'- to 5'-direction. The sequence is that of Polyribonucleotide nucleotidyltransferase from Azobacteroides pseudotrichonymphae genomovar. CFP2.